The following is an 856-amino-acid chain: Envelope glycoprotein gp160 (856 aa).

Residues 1 to 31 (MRVEGIQRNWKQWWIWGILGFWMVMIYNVRG) form the signal peptide. Residues 32-677 (NLWVTVYYGV…ITNWLWYIKI (646 aa)) lie on the Extracellular side of the membrane. The cysteines at positions 53 and 73 are disulfide-linked. Residues N87, N132, N139, N150, N154, N180, N184, N195, N228, N232, N239, N260, N274, N287, N293, N299, N329, and N336 are each glycosylated (N-linked (GlcNAc...) asparagine; by host). 5 cysteine pairs are disulfide-bonded: C118-C203, C125-C194, C130-C151, C216-C245, and C226-C237. Positions 130-150 (CSNRTIDYNNRTDNMGGEIKN) are V1. A V2 region spans residues 151–194 (CSFNMTTEVRDKREKVHALFYRLDIVPLKNESSNTSGDYRLINC). Residues 294–327 (CTRPNNNTRKSIRIGPGQAFYATGEIIGDIRQAH) form a V3 region. A disulfide bridge connects residues C294 and C328. The interval 360–370 (HSGGDLEITTH) is CD4-binding loop. Cystine bridges form between C374–C438 and C381–C411. The tract at residues 381–411 (CNTSSLFNSTYTPNSTENITGTENSIITIPC) is V4. 5 N-linked (GlcNAc...) asparagine; by host glycosylation sites follow: N382, N388, N394, N398, and N441. V5 regions lie at residues 454-464 (GMHDTEIFRPE) and 456-464 (HDTEIFRPE). The segment at 505–525 (AVGIGAVFLGFLGAAGSTMGA) is fusion peptide. The interval 567–585 (KQLQTRVLAIERYLRDQQL) is immunosuppression. C591 and C597 are disulfide-bonded. 4 N-linked (GlcNAc...) asparagine; by host glycosylation sites follow: N604, N609, N618, and N630. The stretch at 626 to 660 (REISNYTNTIYRLLEDSQNQQEKNEQDLLALDKWQ) forms a coiled coil. An MPER; binding to GalCer region spans residues 655–676 (ALDKWQNLWTWFGITNWLWYIK). A helical transmembrane segment spans residues 678–698 (FIKIVGGLIGLRIIFAVLSIV). The Cytoplasmic portion of the chain corresponds to 699–856 (NRVRQGYSPL…IRQGFEAALQ (158 aa)). The YXXL motif; contains endocytosis signal motif lies at 705–708 (YSPL). A disordered region spans residues 712–732 (TLTPNPRGPDRLGGIEEEGGE). C757 is lipidated: S-palmitoyl cysteine; by host.

This sequence belongs to the HIV-1 env protein family. As to quaternary structure, the mature envelope protein (Env) consists of a homotrimer of non-covalently associated gp120-gp41 heterodimers. The resulting complex protrudes from the virus surface as a spike. There seems to be as few as 10 spikes on the average virion. Interacts with host CD4, CCR5 and CXCR4. Gp120 also interacts with the C-type lectins CD209/DC-SIGN and CLEC4M/DC-SIGNR (collectively referred to as DC-SIGN(R)). Gp120 and gp41 interact with GalCer. Gp120 interacts with host ITGA4/ITGB7 complex; on CD4+ T-cells, this interaction results in rapid activation of integrin ITGAL/LFA-1, which facilitates efficient cell-to-cell spreading of HIV-1. Gp120 interacts with cell-associated heparan sulfate; this interaction increases virus infectivity on permissive cells and may be involved in infection of CD4- cells. In terms of assembly, the mature envelope protein (Env) consists of a homotrimer of non-covalently associated gp120-gp41 heterodimers. The resulting complex protrudes from the virus surface as a spike. There seems to be as few as 10 spikes on the average virion. Highly glycosylated by host. The high number of glycan on the protein is reffered to as 'glycan shield' because it contributes to hide protein sequence from adaptive immune system. In terms of processing, palmitoylation of the transmembrane protein and of Env polyprotein (prior to its proteolytic cleavage) is essential for their association with host cell membrane lipid rafts. Palmitoylation is therefore required for envelope trafficking to classical lipid rafts, but not for viral replication. Post-translationally, specific enzymatic cleavages in vivo yield mature proteins. Envelope glycoproteins are synthesized as an inactive precursor that is heavily N-glycosylated and processed likely by host cell furin in the Golgi to yield the mature SU and TM proteins. The cleavage site between SU and TM requires the minimal sequence [KR]-X-[KR]-R. About 2 of the 9 disulfide bonds of gp41 are reduced by P4HB/PDI, following binding to CD4 receptor.

It is found in the virion membrane. The protein resides in the host cell membrane. The protein localises to the host endosome membrane. In terms of biological role, oligomerizes in the host endoplasmic reticulum into predominantly trimers. In a second time, gp160 transits in the host Golgi, where glycosylation is completed. The precursor is then proteolytically cleaved in the trans-Golgi and thereby activated by cellular furin or furin-like proteases to produce gp120 and gp41. Its function is as follows. Attaches the virus to the host lymphoid cell by binding to the primary receptor CD4. This interaction induces a structural rearrangement creating a high affinity binding site for a chemokine coreceptor like CXCR4 and/or CCR5. Acts as a ligand for CD209/DC-SIGN and CLEC4M/DC-SIGNR, which are respectively found on dendritic cells (DCs), and on endothelial cells of liver sinusoids and lymph node sinuses. These interactions allow capture of viral particles at mucosal surfaces by these cells and subsequent transmission to permissive cells. HIV subverts the migration properties of dendritic cells to gain access to CD4+ T-cells in lymph nodes. Virus transmission to permissive T-cells occurs either in trans (without DCs infection, through viral capture and transmission), or in cis (following DCs productive infection, through the usual CD4-gp120 interaction), thereby inducing a robust infection. In trans infection, bound virions remain infectious over days and it is proposed that they are not degraded, but protected in non-lysosomal acidic organelles within the DCs close to the cell membrane thus contributing to the viral infectious potential during DCs' migration from the periphery to the lymphoid tissues. On arrival at lymphoid tissues, intact virions recycle back to DCs' cell surface allowing virus transmission to CD4+ T-cells. Functionally, acts as a class I viral fusion protein. Under the current model, the protein has at least 3 conformational states: pre-fusion native state, pre-hairpin intermediate state, and post-fusion hairpin state. During fusion of viral and target intracellular membranes, the coiled coil regions (heptad repeats) assume a trimer-of-hairpins structure, positioning the fusion peptide in close proximity to the C-terminal region of the ectodomain. The formation of this structure appears to drive apposition and subsequent fusion of viral and target cell membranes. Complete fusion occurs in host cell endosomes and is dynamin-dependent, however some lipid transfer might occur at the plasma membrane. The virus undergoes clathrin-dependent internalization long before endosomal fusion, thus minimizing the surface exposure of conserved viral epitopes during fusion and reducing the efficacy of inhibitors targeting these epitopes. Membranes fusion leads to delivery of the nucleocapsid into the cytoplasm. This chain is Envelope glycoprotein gp160, found in Homo sapiens (Human).